Consider the following 186-residue polypeptide: Ribosome-recycling factor (186 aa).

This sequence belongs to the RRF family.

It is found in the cytoplasm. Its function is as follows. Responsible for the release of ribosomes from messenger RNA at the termination of protein biosynthesis. May increase the efficiency of translation by recycling ribosomes from one round of translation to another. This chain is Ribosome-recycling factor, found in Rhodopseudomonas palustris (strain ATCC BAA-98 / CGA009).